The primary structure comprises 1156 residues: Reverse gyrase 1 (1156 aa).

The RG N-terminal-type zinc-finger motif lies at Met1 to Asn38. Zn(2+) is bound by residues Cys10, Cys13, Cys28, and Cys31. ATP contacts are provided by residues Gln86 and Ala103–Thr110. Residues Ile90 to Pro277 form the Helicase ATP-binding domain. The DEAD box signature appears at Asp184–Asp187. Positions Ile570–Val1156 are topoisomerase I. The region spanning Thr574 to Ile736 is the Toprim domain. Glu580 lines the Mg(2+) pocket. The segment at Ile655 to Ser682 adopts an RG C-terminal-type zinc-finger fold. 4 residues coordinate Zn(2+): Cys658, Cys661, Cys672, and Cys675. Asp705 contacts Mg(2+). In terms of domain architecture, Topo IA-type catalytic spans Asn752–Ser1143. Tyr895 functions as the O-(5'-phospho-DNA)-tyrosine intermediate in the catalytic mechanism.

It in the N-terminal section; belongs to the DEAD box helicase family. DDVD subfamily. In the C-terminal section; belongs to the type IA topoisomerase family. Monomer. The cofactor is Zn(2+). Mg(2+) is required as a cofactor.

It is found in the cytoplasm. It catalyses the reaction ATP + H2O = ADP + phosphate + H(+). Functionally, modifies the topological state of DNA by introducing positive supercoils in an ATP-dependent process, increasing the linking number in steps of +1. Binds to single-stranded DNA, transiently cleaves and then rejoins the ends, introducing a positive supercoil in the process. The scissile phosphodiester is attacked by the catalytic tyrosine of the enzyme, resulting in the formation of a DNA-(5'-phosphotyrosyl)-enzyme intermediate. Probably involved in rewinding DNA strands in regions of the chromosome that have opened up to allow replication, transcription, DNA repair and/or for DNA protection. The polypeptide is Reverse gyrase 1 (Sulfurisphaera tokodaii (strain DSM 16993 / JCM 10545 / NBRC 100140 / 7) (Sulfolobus tokodaii)).